Consider the following 523-residue polypeptide: Amino acid transporter protein 6 (523 aa).

Over 1-19 the chain is Cytoplasmic; that stretch reads MLNVFGVSASMPDDSRSQK. Residues 20–40 traverse the membrane as a helical segment; sequence MGLLGAISYIVGNIVGSGIFI. Residues 41 to 51 lie on the Extracellular side of the membrane; sequence TPTSIIENVNS. A helical membrane pass occupies residues 52–72; it reads VGLSLAIWILAAFISMLGSFC. Over 73–86 the chain is Cytoplasmic; that stretch reads YVELGTSIRLSGGD. The chain crosses the membrane as a helical span at residues 87 to 107; it reads FAYLCFMKWYPVAFAFMCIGC. The Extracellular segment spans residues 108–145; that stretch reads TINYPATLAVQAQTFAEYVFRGAGVELDETSEFWAKKL. Residues 146–166 traverse the membrane as a helical segment; the sequence is LGFSLIILLMFMNFFSLKTFV. Residues 167 to 173 lie on the Cytoplasmic side of the membrane; that stretch reads QRFSILA. Residues 174-194 traverse the membrane as a helical segment; it reads SLAKIAATLLIIITGFYYLIF. At 195 to 214 the chain is on the extracellular side; that stretch reads KHWKQNLEEPFKGSNWNPGP. A helical transmembrane segment spans residues 215–235; it reads FVNALFAGLFSYDGWDILNFG. The Cytoplasmic portion of the chain corresponds to 236–249; sequence AEEIENPKRTMPLS. The chain crosses the membrane as a helical span at residues 250–270; the sequence is IIIGMTCIGVIYVAVNVAYSI. Topologically, residues 271-290 are extracellular; sequence VLSPTEMIASNAVAIDFANK. Asn-289 carries N-linked (GlcNAc...) asparagine glycosylation. The chain crosses the membrane as a helical span at residues 291–311; the sequence is TLGAAAFVVPVMVAILLIGSL. Residues 312 to 348 are Cytoplasmic-facing; that stretch reads NSTMFSASRYLQAVSRQGHIPSAISGIAPNCDSPRVA. The helical transmembrane segment at 349–369 threads the bilayer; that stretch reads LLVHILIAIAVSFLGDPDKLI. Residues 370-404 are Extracellular-facing; sequence NYVAFAQWSQRAFTMSALLYLRIRGRPRHPDRIQL. The helical transmembrane segment at 405–425 threads the bilayer; it reads PIIMPILFFLVCTSMVVISII. At 426–429 the chain is on the cytoplasmic side; it reads DDFK. A helical transmembrane segment spans residues 430-450; the sequence is SSAVGLGILLGGLIIFIIFVW. The Extracellular portion of the chain corresponds to 451–523; the sequence is DRALPSSHTF…GNGQFKCTRM (73 aa). Asn-462 carries N-linked (GlcNAc...) asparagine glycosylation. The PDZ-binding motif motif lies at 521–523; that stretch reads TRM.

Belongs to the amino acid-polyamine-organocation (APC) superfamily. As to quaternary structure, interacts (via PDZ-binding motif) with nfrl-1 (via PDZ 2 domain); the interaction with nrfl-1 is required to sequester aat-6 to the apical cell membrane of intestinal cells. As to expression, expressed at the apical cell membrane of intestinal cells.

The protein localises to the apical cell membrane. Amino acid transporter that mediates the uptake of the L-enantiomers of various amino acids, including L-glutamate. May play a role in promoting fertility. This chain is Amino acid transporter protein 6, found in Caenorhabditis elegans.